Reading from the N-terminus, the 63-residue chain is Keratin-associated protein 19-8 (63 aa).

It belongs to the KRTAP type 19 family. Interacts with hair keratins.

In the hair cortex, hair keratin intermediate filaments are embedded in an interfilamentous matrix, consisting of hair keratin-associated proteins (KRTAP), which are essential for the formation of a rigid and resistant hair shaft through their extensive disulfide bond cross-linking with abundant cysteine residues of hair keratins. The matrix proteins include the high-sulfur and high-glycine-tyrosine keratins. The polypeptide is Keratin-associated protein 19-8 (KRTAP19-8) (Homo sapiens (Human)).